The following is a 296-amino-acid chain: Phosphatidylglycerol--prolipoprotein diacylglyceryl transferase (296 aa).

The next 4 membrane-spanning stretches (helical) occupy residues 28 to 48, 72 to 92, 110 to 130, and 139 to 159; these read WYGLCFSLGILFASLLGIYLA, FALYSLLFIIPGSRIAYILFY, GGLASHGGMLGLILWALIFSW, and LTFLFLCDLCASVFGCAAFMI. Arg-160 is a binding site for a 1,2-diacyl-sn-glycero-3-phospho-(1'-sn-glycerol). Helical transmembrane passes span 197–217, 226–246, and 263–283; these read VQLYEGMSYLLLSIILFFLSY, GWVTSLGLVGISLIRFFAEFF, and GQILSFPLFVFGLCLGIACFL.

It belongs to the Lgt family.

It is found in the cell inner membrane. The catalysed reaction is L-cysteinyl-[prolipoprotein] + a 1,2-diacyl-sn-glycero-3-phospho-(1'-sn-glycerol) = an S-1,2-diacyl-sn-glyceryl-L-cysteinyl-[prolipoprotein] + sn-glycerol 1-phosphate + H(+). Its pathway is protein modification; lipoprotein biosynthesis (diacylglyceryl transfer). Functionally, catalyzes the transfer of the diacylglyceryl group from phosphatidylglycerol to the sulfhydryl group of the N-terminal cysteine of a prolipoprotein, the first step in the formation of mature lipoproteins. In Chlamydia caviae (strain ATCC VR-813 / DSM 19441 / 03DC25 / GPIC) (Chlamydophila caviae), this protein is Phosphatidylglycerol--prolipoprotein diacylglyceryl transferase.